Consider the following 473-residue polypeptide: Photosystem II CP43 reaction center protein (473 aa).

Residues 1–14 (MKILYSLRRFYHVE) constitute a propeptide that is removed on maturation. Position 15 is an N-acetylthreonine (Thr15). At Thr15 the chain carries Phosphothreonine. 5 helical membrane passes run 69-93 (LFEV…PHLA), 134-155 (LLGP…KDRN), 178-200 (KALY…RKIT), 255-275 (KPFA…LSYS), and 291-312 (WFNN…ASQA). Glu367 contributes to the [CaMn4O5] cluster binding site. A helical membrane pass occupies residues 447–471 (RARAAAAGFEKGIDRDLEPVLYMTP).

It belongs to the PsbB/PsbC family. PsbC subfamily. In terms of assembly, PSII is composed of 1 copy each of membrane proteins PsbA, PsbB, PsbC, PsbD, PsbE, PsbF, PsbH, PsbI, PsbJ, PsbK, PsbL, PsbM, PsbT, PsbX, PsbY, PsbZ, Psb30/Ycf12, at least 3 peripheral proteins of the oxygen-evolving complex and a large number of cofactors. It forms dimeric complexes. It depends on Binds multiple chlorophylls and provides some of the ligands for the Ca-4Mn-5O cluster of the oxygen-evolving complex. It may also provide a ligand for a Cl- that is required for oxygen evolution. PSII binds additional chlorophylls, carotenoids and specific lipids. as a cofactor.

Its subcellular location is the plastid. The protein resides in the chloroplast thylakoid membrane. Functionally, one of the components of the core complex of photosystem II (PSII). It binds chlorophyll and helps catalyze the primary light-induced photochemical processes of PSII. PSII is a light-driven water:plastoquinone oxidoreductase, using light energy to abstract electrons from H(2)O, generating O(2) and a proton gradient subsequently used for ATP formation. The chain is Photosystem II CP43 reaction center protein from Sorghum bicolor (Sorghum).